The chain runs to 247 residues: ATP synthase subunit a, chloroplastic (247 aa).

Helical transmembrane passes span 38–58 (QVLI…AIAV), 95–115 (VPFI…GALL), 134–154 (INTT…AGLT), 199–219 (LVVV…VMFL), and 220–240 (GLFT…AYIG).

Belongs to the ATPase A chain family. As to quaternary structure, F-type ATPases have 2 components, CF(1) - the catalytic core - and CF(0) - the membrane proton channel. CF(1) has five subunits: alpha(3), beta(3), gamma(1), delta(1), epsilon(1). CF(0) has four main subunits: a, b, b' and c.

It is found in the plastid. The protein localises to the chloroplast thylakoid membrane. In terms of biological role, key component of the proton channel; it plays a direct role in the translocation of protons across the membrane. This chain is ATP synthase subunit a, chloroplastic (atpI), found in Spinacia oleracea (Spinach).